A 232-amino-acid polypeptide reads, in one-letter code: Large ribosomal subunit protein uL1 (232 aa).

The protein belongs to the universal ribosomal protein uL1 family. As to quaternary structure, part of the 50S ribosomal subunit.

Binds directly to 23S rRNA. The L1 stalk is quite mobile in the ribosome, and is involved in E site tRNA release. In terms of biological role, protein L1 is also a translational repressor protein, it controls the translation of the L11 operon by binding to its mRNA. This chain is Large ribosomal subunit protein uL1, found in Thermosipho africanus (strain TCF52B).